The primary structure comprises 394 residues: MTKIETRTEPMVLNMGPHHPSMHGVLRLIVTLDGEDVVDCEPVIGYLHRGMEKIAESRTNIMYVPYVSRWDYAAGMFNEAITVNAPEKLADIEVPKRAQYIRVIMLELNRIANHLLWLGPFMADVGAQTPFFYIFREREMIYDLWEAASGMRLINNNYFRVGGVAVDLPYGWNDKCEDFCDYFLPKVDEYEKLITNNPIFRRRVEGVGTVTREEAINWGLSGPMLRGSGVKWDLRKVDHYECYDELDWEVQYETAGDCFARYLVRIREMRESVKIIRQALKAMPGGPYENLEAKRLQEGKKSEWNDFQYQYIAKKVAPTFKIPAGEHYVRLESGKGELGIFIQGNDDVFPWRWKIRSADFNNLQILPHILKGVKVADIMAILGSIDIIMGSVDR.

It belongs to the complex I 49 kDa subunit family. As to quaternary structure, NDH-1 can be composed of about 15 different subunits; different subcomplexes with different compositions have been identified which probably have different functions. In terms of processing, the initiator methionine has been seen to be kept and removed.

It is found in the cellular thylakoid membrane. It catalyses the reaction a plastoquinone + NADH + (n+1) H(+)(in) = a plastoquinol + NAD(+) + n H(+)(out). The enzyme catalyses a plastoquinone + NADPH + (n+1) H(+)(in) = a plastoquinol + NADP(+) + n H(+)(out). Its function is as follows. NDH-1 shuttles electrons from an unknown electron donor, via FMN and iron-sulfur (Fe-S) centers, to quinones in the respiratory and/or the photosynthetic chain. The immediate electron acceptor for the enzyme in this species is believed to be plastoquinone. Couples the redox reaction to proton translocation, and thus conserves the redox energy in a proton gradient. Cyanobacterial NDH-1 also plays a role in inorganic carbon-concentration. In Synechocystis sp. (strain ATCC 27184 / PCC 6803 / Kazusa), this protein is NAD(P)H-quinone oxidoreductase subunit H (ndhH).